We begin with the raw amino-acid sequence, 145 residues long: 3-dehydroquinate dehydratase (145 aa).

The active-site Proton acceptor is the Tyr-24. 3 residues coordinate substrate: Asn-75, His-81, and Asp-88. The active-site Proton donor is the His-101. Residues 102–103 (IS) and Arg-112 each bind substrate.

The protein belongs to the type-II 3-dehydroquinase family. Homododecamer.

The catalysed reaction is 3-dehydroquinate = 3-dehydroshikimate + H2O. The protein operates within metabolic intermediate biosynthesis; chorismate biosynthesis; chorismate from D-erythrose 4-phosphate and phosphoenolpyruvate: step 3/7. Functionally, catalyzes a trans-dehydration via an enolate intermediate. This chain is 3-dehydroquinate dehydratase, found in Corynebacterium glutamicum (strain R).